We begin with the raw amino-acid sequence, 481 residues long: UDP-glycosyltransferase 72E3 (481 aa).

Residue His-18 is the Proton acceptor of the active site. Residue His-18 coordinates an anthocyanidin. The active-site Charge relay is Asp-111. Residues Ala-346, Gln-348, His-363, Trp-366, Ser-368, and Glu-371 each contribute to the UDP-alpha-D-glucose site. Ala-386 is an an anthocyanidin binding site. Residues Glu-387 and Gln-388 each coordinate UDP-alpha-D-glucose.

Belongs to the UDP-glycosyltransferase family. As to expression, expressed in seedlings and roots, and at lower levels in flowers and siliques.

It catalyses the reaction (E)-4-coumarate + UDP-alpha-D-glucose = 4-O-(beta-D-glucosyl)-trans-4-coumarate + UDP + H(+). The catalysed reaction is (E)-sinapyl alcohol + UDP-alpha-D-glucose = 4-O-(beta-D-glucosyl)-trans-4-sinapoyl alcohol + UDP + H(+). It carries out the reaction (E)-coniferol + UDP-alpha-D-glucose = 4-O-(beta-D-glucosyl)-(E)-coniferol + UDP + H(+). The enzyme catalyses (E)-sinapate + UDP-alpha-D-glucose = 4-O-(beta-D-glucosyl)-trans-sinapate + UDP + H(+). It catalyses the reaction (E)-coniferaldehyde + UDP-alpha-D-glucose = 4-O-(beta-D-glucosyl)-4-(E)-coniferyl aldehyde + UDP + H(+). The catalysed reaction is (E)-sinapaldehyde + UDP-alpha-D-glucose = 4-O-(beta-D-glucosyl)-4-trans-sinapoyl aldehyde + UDP + H(+). Involved in the O-glucosylation of monolignols (alcohol monomers of lignin). Glucosylates coniferyl alcohol to form coniferyl alcohol 4-O-glucoside. Glucosylates sinapyl alcohol to form sinapyl alcohol 4-O-glucoside. Possesses low activity with sinapate as substrate. This chain is UDP-glycosyltransferase 72E3, found in Arabidopsis thaliana (Mouse-ear cress).